The chain runs to 958 residues: Nuclear factor NF-kappa-B p100 subunit (958 aa).

The RHD domain maps to 40–230 (LLMSYLSIIE…DPIHDSKSPG (191 aa)). Positions 343–347 (RKRRK) match the Nuclear localization signal motif. Disordered regions lie at residues 350–374 (PTFN…SFGQ) and 411–442 (CSAT…QTDS). The segment at 352–390 (FNNHFYGGGSPMGGAPPGSSFGQGGGSNINYQYTGMNSA) is GRR. Residues 357–374 (YGGGSPMGGAPPGSSFGQ) show a composition bias toward gly residues. Polar residues predominate over residues 412 to 425 (SATNSSEKNQQPSI). ANK repeat units follow at residues 500–529 (NGDT…SIPN), 539–568 (LQQT…DPTI), 572–603 (YGNS…QKNL), 610–639 (HGLS…NVNS), 644–674 (SGKS…DINA), and 678–707 (GGNT…NVLS). A disordered region spans residues 705–766 (VLSENDEPVN…SAEEMHRREQ (62 aa)). A compositionally biased stretch (acidic residues) spans 724 to 734 (SESDSDVQMDT). Basic and acidic residues predominate over residues 753 to 766 (ECEHSAEEMHRREQ). Residues 815-901 (VNVLALETNT…EGVELLCKSE (87 aa)) enclose the Death domain. The span at 904 to 916 (AKHHSPAESKNDS) shows a compositional bias: basic and acidic residues. The segment at 904 to 958 (AKHHSPAESKNDSAYESQSMEVDQSSGNLMDDSQKQTIPVSAAELCPTTEPTIGQ) is disordered. Over residues 917 to 931 (AYESQSMEVDQSSGN) the composition is skewed to polar residues.

As to quaternary structure, active NF-kappa-B is a heterodimer of an about 52 kDa DNA-binding subunit and the weak DNA-binding subunit p65. Two heterodimers might form a labile tetramer. While translation occurs, the particular unfolded structure after the GRR repeat promotes the generation of p52 making it an acceptable substrate for the proteasome. This process is known as cotranslational processing. The processed form is active and the unprocessed form acts as an inhibitor (I kappa B-like), being able to form cytosolic complexes with NF-kappa B, trapping it in the cytoplasm. Complete folding of the region downstream of the GRR repeat precludes processing. Post-translationally, constitutive processing is tightly suppressed by its C-terminal processing inhibitory domain, named PID, which contains the death domain. In terms of tissue distribution, expressed in spleen.

The protein localises to the nucleus. Its subcellular location is the cytoplasm. Appears to have dual functions such as cytoplasmic retention of attached NF-kappa-B proteins and generation of p52 by a cotranslational processing. The proteasome-mediated process ensures the production of both p52 and p100 and preserves their independent function. p52 binds to the kappa-B consensus sequence 5'-GGRNNYYCC-3', located in the enhancer region of genes involved in immune response and acute phase reactions. In concert with RELB, may play a role in the regulation of the circadian clock. The polypeptide is Nuclear factor NF-kappa-B p100 subunit (nfkb2) (Xenopus laevis (African clawed frog)).